The primary structure comprises 256 residues: Protein FixA (256 aa).

It belongs to the ETF beta-subunit/FixA family. As to quaternary structure, heterodimer of FixA and FixB.

It participates in amine and polyamine metabolism; carnitine metabolism. Functionally, required for anaerobic carnitine reduction. May bring reductant to CaiA. The sequence is that of Protein FixA from Escherichia coli O81 (strain ED1a).